The sequence spans 416 residues: Serine hydroxymethyltransferase (416 aa).

(6S)-5,6,7,8-tetrahydrofolate is bound by residues L121 and 125 to 127 (GHL). Residue K229 is modified to N6-(pyridoxal phosphate)lysine.

It belongs to the SHMT family. As to quaternary structure, homodimer. Requires pyridoxal 5'-phosphate as cofactor.

It localises to the cytoplasm. It carries out the reaction (6R)-5,10-methylene-5,6,7,8-tetrahydrofolate + glycine + H2O = (6S)-5,6,7,8-tetrahydrofolate + L-serine. The protein operates within one-carbon metabolism; tetrahydrofolate interconversion. It functions in the pathway amino-acid biosynthesis; glycine biosynthesis; glycine from L-serine: step 1/1. Its function is as follows. Catalyzes the reversible interconversion of serine and glycine with tetrahydrofolate (THF) serving as the one-carbon carrier. This reaction serves as the major source of one-carbon groups required for the biosynthesis of purines, thymidylate, methionine, and other important biomolecules. Also exhibits THF-independent aldolase activity toward beta-hydroxyamino acids, producing glycine and aldehydes, via a retro-aldol mechanism. In Neisseria gonorrhoeae (strain ATCC 700825 / FA 1090), this protein is Serine hydroxymethyltransferase.